A 140-amino-acid chain; its full sequence is Anti-sigma F factor (140 aa).

Belongs to the anti-sigma-factor family.

The enzyme catalyses L-seryl-[protein] + ATP = O-phospho-L-seryl-[protein] + ADP + H(+). The catalysed reaction is L-threonyl-[protein] + ATP = O-phospho-L-threonyl-[protein] + ADP + H(+). Binds to sigma F and blocks its ability to form an RNA polymerase holoenzyme (E-sigma F). Phosphorylates SpoIIAA on a serine residue. This phosphorylation may enable SpoIIAA to act as an anti-anti-sigma factor that counteracts SpoIIAB and thus releases sigma F from inhibition. The protein is Anti-sigma F factor of Clostridium perfringens (strain ATCC 13124 / DSM 756 / JCM 1290 / NCIMB 6125 / NCTC 8237 / Type A).